We begin with the raw amino-acid sequence, 463 residues long: L-seryl-tRNA(Sec) selenium transferase (463 aa).

Lys-295 is modified (N6-(pyridoxal phosphate)lysine).

This sequence belongs to the SelA family. Homodecamer; pentamer of dimers. Binds only one seryl-tRNA(Sec) per dimer. The cofactor is pyridoxal 5'-phosphate.

The protein resides in the cytoplasm. It catalyses the reaction L-seryl-tRNA(Sec) + selenophosphate + H(+) = L-selenocysteinyl-tRNA(Sec) + phosphate. The protein operates within aminoacyl-tRNA biosynthesis; selenocysteinyl-tRNA(Sec) biosynthesis; selenocysteinyl-tRNA(Sec) from L-seryl-tRNA(Sec) (bacterial route): step 1/1. Functionally, converts seryl-tRNA(Sec) to selenocysteinyl-tRNA(Sec) required for selenoprotein biosynthesis. The polypeptide is L-seryl-tRNA(Sec) selenium transferase (Escherichia coli (strain 55989 / EAEC)).